A 688-amino-acid polypeptide reads, in one-letter code: Probable glucan endo-1,3-beta-glucosidase btgC (688 aa).

Disordered regions lie at residues 1-91, 126-148, and 168-195; these read MSGP…NLGP, ANIP…PEPP, and GQLT…IPYQ. Over 1-307 the chain is Cytoplasmic; it reads MSGPNRTYSF…PKPGGGNKKR (307 aa). A compositionally biased stretch (polar residues) spans 175–188; sequence SVSHLSSTNPSQRN. Residues 308 to 328 form a helical; Signal-anchor for type II membrane protein membrane-spanning segment; that stretch reads GWIVGAILAFIIIGAIVGGAV. At 329–688 the chain is on the extracellular side; it reads GGTIGHRGNE…IPDCGGKTAT (360 aa). Positions 334–363 are disordered; it reads HRGNEEPSSASSASSSSTQTATEDTSVNGD. A compositionally biased stretch (low complexity) spans 341 to 355; it reads SSASSASSSSTQTAT. Residues asparagine 408, asparagine 431, and asparagine 459 are each glycosylated (N-linked (GlcNAc...) asparagine). Catalysis depends on glutamate 491, which acts as the Proton donor. The active-site Nucleophile is glutamate 590. N-linked (GlcNAc...) asparagine glycosylation is found at asparagine 609 and asparagine 635.

The protein belongs to the glycosyl hydrolase 17 family.

Its subcellular location is the cell membrane. It carries out the reaction Hydrolysis of (1-&gt;3)-beta-D-glucosidic linkages in (1-&gt;3)-beta-D-glucans.. Functionally, glucanases play a role in cell expansion during growth, in cell-cell fusion during mating, and in spore release during sporulation. This enzyme may be involved in beta-glucan degradation. Active on laminarin and lichenan. The protein is Probable glucan endo-1,3-beta-glucosidase btgC (btgC) of Aspergillus fumigatus (strain ATCC MYA-4609 / CBS 101355 / FGSC A1100 / Af293) (Neosartorya fumigata).